A 288-amino-acid polypeptide reads, in one-letter code: Zinc finger protein ZAT9 (288 aa).

A C2H2-type 1 zinc finger spans residues 4–26 (YKCRVCFKSFVNGKALGGHMRSH). 3 disordered regions span residues 20 to 82 (GGHM…LTRK), 101 to 123 (SQLGYKPESDQEPPHSSASDTTT), and 189 to 210 (GGHRASHKKNRVSNNKTEQRSE). Residues 37–52 (PSQLSYETESDVSSSD) show a composition bias toward polar residues. 2 C2H2-type zinc fingers span residues 173 to 195 (YKCETCGKVFKSYQALGGHRASH) and 224 to 246 (HECPICLRVFASGQALGGHKRSH).

It is found in the nucleus. Its function is as follows. Probable transcription factor that may be involved in stress responses. The chain is Zinc finger protein ZAT9 (ZAT9) from Arabidopsis thaliana (Mouse-ear cress).